Here is a 95-residue protein sequence, read N- to C-terminus: Small ribosomal subunit protein bS6 (95 aa).

Belongs to the bacterial ribosomal protein bS6 family.

Functionally, binds together with bS18 to 16S ribosomal RNA. The protein is Small ribosomal subunit protein bS6 of Bacillus licheniformis (strain ATCC 14580 / DSM 13 / JCM 2505 / CCUG 7422 / NBRC 12200 / NCIMB 9375 / NCTC 10341 / NRRL NRS-1264 / Gibson 46).